Consider the following 571-residue polypeptide: Alpha-1D adrenergic receptor (571 aa).

The Extracellular segment spans residues 1-94 (MTFRDLLSVN…AVGGLVVSAQ (94 aa)). Residues 13–75 (GSRSDGSAGG…SSAGEPGAAG (63 aa)) are disordered. Gly residues predominate over residues 19–34 (SAGGASAGGSGGGSGG). A compositionally biased stretch (low complexity) spans 35–47 (AAASEGRAVDGVP). Residues 48-57 (GTAGSGGVVG) show a composition bias toward gly residues. 2 N-linked (GlcNAc...) asparagine glycosylation sites follow: N64 and N81. A helical membrane pass occupies residues 95-120 (GVGVGVFLAAFILMAVAGNLLVILSV). Residues 121 to 132 (ACNRHLQTVTNY) lie on the Cytoplasmic side of the membrane. A helical transmembrane segment spans residues 133-158 (FIVNLAVADLLLSATVLPFSATMEVL). The Extracellular portion of the chain corresponds to 159–168 (GFWAFGRAFC). The helical transmembrane segment at 169–191 (DVWAAVDVLCCTASILSLCTISV) threads the bilayer. At 192 to 212 (DRYVGVRHSLKYPSIMTERKA) the chain is on the cytoplasmic side. A helical membrane pass occupies residues 213–237 (AAILALLWAVAIVVSVGPLLGWKEP). Residues 238–250 (VPPDERFCGITEE) lie on the Extracellular side of the membrane. A helical transmembrane segment spans residues 251 to 274 (AGYAVFSSLCSFYLPMAVIVVMYC). Residues 275–348 (RVYVVARSTT…KFSREKKAAK (74 aa)) lie on the Cytoplasmic side of the membrane. A helical membrane pass occupies residues 349-373 (TLAIVVGVFVLCWFPFFFVLPLGSL). Residues 374–380 (FPQLKPS) are Extracellular-facing. Residues 381–405 (EGVFKVIFWLGYFNSCVNPLIYPCS) form a helical membrane-spanning segment. At 406-571 (SREFKRAFLR…DYSHLRETDI (166 aa)) the chain is on the cytoplasmic side. C419 is lipidated: S-palmitoyl cysteine. The segment at 465 to 487 (LPAPEATDTPSAPEAQAPVVGRR) is disordered.

The protein belongs to the G-protein coupled receptor 1 family. Adrenergic receptor subfamily. ADRA1D sub-subfamily. As to quaternary structure, interacts with FLNA (via filamin repeat 21); increases PKA-mediated phosphorylation of FLNA. In terms of processing, palmitoylated. Palmitoylation by ZDHHC21 may increase the expression of the receptor and regulate downstream signaling.

It is found in the cell membrane. This alpha-adrenergic receptor mediates its effect through the influx of extracellular calcium. This is Alpha-1D adrenergic receptor (ADRA1D) from Sus scrofa (Pig).